The chain runs to 311 residues: Malate dehydrogenase (311 aa).

NAD(+) is bound by residues 7-13 and aspartate 34; that span reads GAAGGIG. Substrate-binding residues include arginine 81 and arginine 87. NAD(+) contacts are provided by residues asparagine 94 and 117–119; that span reads ITN. 2 residues coordinate substrate: asparagine 119 and arginine 153. Histidine 177 functions as the Proton acceptor in the catalytic mechanism. Methionine 227 lines the NAD(+) pocket.

Belongs to the LDH/MDH superfamily. MDH type 1 family. As to quaternary structure, homodimer.

It carries out the reaction (S)-malate + NAD(+) = oxaloacetate + NADH + H(+). In terms of biological role, catalyzes the reversible oxidation of malate to oxaloacetate. This is Malate dehydrogenase from Shewanella putrefaciens (strain CN-32 / ATCC BAA-453).